The primary structure comprises 481 residues: Phototropic-responsive NPH3 family protein NPY4 (481 aa).

Residues 29–102 (TEIIIIIGNV…CYGITVTLNA (74 aa)) enclose the BTB domain. The region spanning 207–450 (DWWVEDLCEL…VQVLFFEQIR (244 aa)) is the NPH3 domain. At Tyr391 the chain carries Phosphotyrosine. The disordered stretch occupies residues 456 to 481 (TGYSTPELTTTTLNTEDDEWDHEKEF). Low complexity predominate over residues 460–469 (TPELTTTTLN).

Belongs to the NPH3 family. In terms of tissue distribution, expressed in the hypocotyl cells that would differentiate into vascular bundles. Highly expressed in primary root tips and radicles.

Its subcellular location is the cell membrane. It localises to the cytoplasm. The protein localises to the cytosol. It functions in the pathway protein modification; protein ubiquitination. In terms of biological role, may act as a substrate-specific adapter of an E3 ubiquitin-protein ligase complex (CUL3-RBX1-BTB) which mediates the ubiquitination and subsequent proteasomal degradation of target proteins. Plays an essential role in auxin-mediated organogenesis and in root gravitropic responses through the control of PIN proteins (e.g. PIN1 and PIN2) polarity in the root tip endodermal cell layer and in shoot epidermis. Recruited to the plasma membrane by PINs (e.g. PIN1 and PIN2) and, in concert with AGC kinases-mediated (e.g. D6PK and PID) PINs phosphorylation, maintains their polarity through limiting lateral diffusion-based escape. The chain is Phototropic-responsive NPH3 family protein NPY4 from Arabidopsis thaliana (Mouse-ear cress).